The chain runs to 196 residues: Rho-related GTP-binding protein RhoB (196 aa).

Residue 12–19 (GDGACGKT) participates in GTP binding. An O-linked (GlcNAc) tyrosine; by Photorhabdus PAU_02230 glycan is attached at Tyr-34. The Effector region motif lies at 34-42 (YVPTVFENY). The (Microbial infection) O-linked (Glc) threonine; by C.difficile toxins TcdA and TcdB glycan is linked to Thr-37. Asn-41 is subject to ADP-ribosylasparagine; by botulinum toxin. Residues 59 to 63 (DTAGQ) and 117 to 120 (NKKD) each bind GTP. Phosphotyrosine is present on Tyr-154. S-palmitoyl cysteine attachment occurs at residues Cys-189 and Cys-192. Position 193 is a cysteine methyl ester (Cys-193). Cys-193 carries S-farnesyl cysteine; in plasma membrane form lipidation. The S-geranylgeranyl cysteine; in endosomal form moiety is linked to residue Cys-193. Residues 194-196 (KVL) constitute a propeptide, removed in mature form.

This sequence belongs to the small GTPase superfamily. Rho family. As to quaternary structure, binds ROCK1 and ROCK2. Also binds PKN1/PRK1. Interacts with ARGGEF3. Interacts with RTKN. Interacts with AKAP13. Interacts with RIPOR1. In terms of processing, prenylation specifies the subcellular location of RHOB. The farnesylated form is localized to the plasma membrane while the geranylgeranylated form is localized to the endosome. (Microbial infection) Glycosylated at Tyr-34 by Photorhabdus asymbiotica toxin PAU_02230. Mono-O-GlcNAcylation by PAU_02230 inhibits downstream signaling by an impaired interaction with diverse regulator and effector proteins of Rho and leads to actin disassembly. Post-translationally, (Microbial infection) Glucosylated at Thr-37 by C.difficile toxins TcdA and TcdB in the colonic epithelium. Monoglucosylation completely prevents the recognition of the downstream effector, blocking the GTPases in their inactive form, leading to actin cytoskeleton disruption.

It localises to the late endosome membrane. The protein localises to the cell membrane. It is found in the nucleus. Its subcellular location is the cleavage furrow. Mediates apoptosis in neoplastically transformed cells after DNA damage. Not essential for development but affects cell adhesion and growth factor signaling in transformed cells. Plays a negative role in tumorigenesis as deletion causes tumor formation. Involved in intracellular protein trafficking of a number of proteins. Targets PKN1 to endosomes and is involved in trafficking of the EGF receptor from late endosomes to lysosomes. Also required for stability and nuclear trafficking of AKT1/AKT which promotes endothelial cell survival during vascular development. Serves as a microtubule-dependent signal that is required for the myosin contractile ring formation during cell cycle cytokinesis. Required for genotoxic stress-induced cell death in breast cancer cells. This is Rho-related GTP-binding protein RhoB (RHOB) from Homo sapiens (Human).